Consider the following 219-residue polypeptide: MTSGESKTGLKNVYPSAKKLLPKVEEGEAEDYCTPGAFELERLFWKGSPQYTHVNEVWPKLYIGDETTALDRYGLQKAGFTHVLNAAHGRWNVDTGPDYYRDMAIEYHGVEADDLPSFDLSVFFYPAAAFIDAALRYDHNKILVHCVMGRSRSATLVLAYLMIHRNMTLVDAIQQVAKNRCVLPNRGFLKQLRELDRQLVQQRRQAQQGEDAEKCEQEP.

Positions 53-201 (HVNEVWPKLY…LRELDRQLVQ (149 aa)) constitute a Tyrosine-protein phosphatase domain. 145 to 152 (HCVMGRSR) provides a ligand contact to substrate. C146 acts as the Phosphocysteine intermediate in catalysis.

The protein belongs to the protein-tyrosine phosphatase family. Non-receptor class dual specificity subfamily. As to quaternary structure, homodimer. Interacts with PRKAA2.

The protein resides in the cytoplasm. Its subcellular location is the nucleus. The enzyme catalyses O-phospho-L-tyrosyl-[protein] + H2O = L-tyrosyl-[protein] + phosphate. It catalyses the reaction O-phospho-L-seryl-[protein] + H2O = L-seryl-[protein] + phosphate. The catalysed reaction is O-phospho-L-threonyl-[protein] + H2O = L-threonyl-[protein] + phosphate. Its function is as follows. Dual specificity phosphatase able to dephosphorylate phosphotyrosine, phosphoserine and phosphothreonine residues within the same substrate, with a preference for phosphotyrosine as a substrate. Involved in the modulation of intracellular signaling cascades. May regulate glucose metabolism by activating, AMPK, an energy sensor protein kinase. Affects MAP kinase signaling though modulation of the ERK1/2 cascade in skeletal muscle promoting muscle cell differentiation, development and atrophy. This is Dual specificity phosphatase 29 (DUSP29) from Bos taurus (Bovine).